Here is a 197-residue protein sequence, read N- to C-terminus: Probable molybdenum cofactor guanylyltransferase (197 aa).

GTP is bound by residues 10-12 (LCG), Lys-22, Asp-73, and Asp-102. Asp-102 is a Mg(2+) binding site.

Belongs to the MobA family. It depends on Mg(2+) as a cofactor.

It localises to the cytoplasm. The enzyme catalyses Mo-molybdopterin + GTP + H(+) = Mo-molybdopterin guanine dinucleotide + diphosphate. Its function is as follows. Transfers a GMP moiety from GTP to Mo-molybdopterin (Mo-MPT) cofactor (Moco or molybdenum cofactor) to form Mo-molybdopterin guanine dinucleotide (Mo-MGD) cofactor. The polypeptide is Probable molybdenum cofactor guanylyltransferase (Methanothermobacter thermautotrophicus (strain ATCC 29096 / DSM 1053 / JCM 10044 / NBRC 100330 / Delta H) (Methanobacterium thermoautotrophicum)).